The primary structure comprises 130 residues: Small ribosomal subunit protein uS9 (130 aa).

The protein belongs to the universal ribosomal protein uS9 family.

The polypeptide is Small ribosomal subunit protein uS9 (Pseudomonas fluorescens (strain ATCC BAA-477 / NRRL B-23932 / Pf-5)).